Here is a 212-residue protein sequence, read N- to C-terminus: Proheparin-binding EGF-like growth factor (212 aa).

The signal sequence occupies residues 1 to 18 (MDGRVVLIHALLTAVCSA). At 19–167 (AVGKFGRDGP…PSTYDHTTAL (149 aa)) the chain is on the extracellular side. A disordered region spans residues 82–108 (SKPQGPVTPKKKGNGNKRRKGKGLGKK). Residues 90–106 (PKKKGNGNKRRKGKGLG) are compositionally biased toward basic residues. In terms of domain architecture, EGF-like spans 108 to 148 (KRDPCLRKYKDFCIHGECKYIRELGAPSCICQPGYHGERCH). Cystine bridges form between Cys-112–Cys-125, Cys-120–Cys-136, and Cys-138–Cys-147. Residues 153–212 (PVEHPPSTYDHTTALAVVAVVLSSLCLVIITALLMFRCHKRGVYDVENEEKIKLGITVNH) constitute a propeptide, C-terminal. The helical transmembrane segment at 168–188 (AVVAVVLSSLCLVIITALLMF) threads the bilayer. Topologically, residues 189–212 (RCHKRGVYDVENEEKIKLGITVNH) are cytoplasmic.

In terms of assembly, interacts with CNIH2.

It localises to the secreted. It is found in the extracellular space. The protein resides in the cell membrane. In terms of biological role, may be involved in macrophage-mediated cellular proliferation. It is mitogenic for fibroblasts and smooth muscle but not endothelial cells. It is able to bind EGF receptor/EGFR with higher affinity than EGF itself and is a far more potent mitogen for smooth muscle cells than EGF. Plays an important role in the proper development of cranial nerves by inhibiting the migration of the cranial neural crest cells (NCCs) into the odd-numbered neuromeres (r3 and r5) of the hindbrain Plays a role in mediating v-Jun-induced oncogenic transformation. The sequence is that of Proheparin-binding EGF-like growth factor (HBEGF) from Gallus gallus (Chicken).